An 812-amino-acid chain; its full sequence is MRVPSLSVLSFLLGTALAAASNFEAGLLSSGKVSLGDWKSAHEKASQFVAKLNTTEKIKLITGSSVTTTNGETFTALDILDGDMGAQAYYYVSAFSLSSALAMTWDKEAMYEQGRAIAAEFYGKGIQMVAGPTSQPLGRTPWGGRLVESFGPDPYLNGIATGLETRAYADVGVIAGAKHFILNEQETNRTGGMGGGGGAPGGGGMGRGAEFSSSVPGGMSPTSSAGAIPSSTSTPGGSGMGGGMAGSSAFSSSSSSGAPYSSNADDKTLHETYLWSFYDAVHSGLGGVMCAMTKVNGTLSCQSSSLLLDILKTELGFPGMVWPDTNGQQDALASAANGLDYGSSSLWSESTIEGYLESNNITEARLNDMAIRNLMGYYYVNLDNGTQPSTAAQDDYVDVRANHAKLIRSHGSKSMVLLKNKNNTLPLYKPHKMAIFGSHARAAVAGPNMQFSVEGSGPTYDGHIATDSGSGQASLPYLITPENALNIKASQDGTMLRWIANDTYSSSTGSALVMQGSSSTSVTPSVSAYSENMDVCLVFINALAGEGADRTELRNTDQDNLINEVADNCDNTVVVINTVGARILDSWIEHENVTAVLYGSLLGQESGNSIVDVLYGDVNPSGRLTYTIAKTESDYNVDICYTAQCNFTEGNYIDYRYFDAYNVTPRYEFGYGLSYTDFAYSNLHIQGPSALSTYPTGQLAVGGYEDLWDTVAKVTVTIRNAGSLDGAEVPQLYISYPDVAKQPVRQLRGFHNVYIKKGQSTKVTFELRRRDISYWDVQHQKWAVAPGTYEAWVGASSRDLRTHGSFVVKTKA.

A signal peptide spans 1-18 (MRVPSLSVLSFLLGTALA). 2 N-linked (GlcNAc...) asparagine glycosylation sites follow: Asn53 and Asn188. The disordered stretch occupies residues 186–248 (ETNRTGGMGG…GMGGGMAGSS (63 aa)). Residues 191–207 (GGMGGGGGAPGGGGMGR) show a composition bias toward gly residues. Over residues 211–225 (FSSSVPGGMSPTSSA) the composition is skewed to polar residues. The span at 236–245 (GGSGMGGGMA) shows a compositional bias: gly residues. Asn296 carries N-linked (GlcNAc...) asparagine glycosylation. Residue Asp324 is part of the active site. Residues Asn360, Asn384, Asn422, Asn501, Asn592, and Asn646 are each glycosylated (N-linked (GlcNAc...) asparagine).

This sequence belongs to the glycosyl hydrolase 3 family.

It localises to the secreted. The catalysed reaction is Hydrolysis of terminal, non-reducing beta-D-glucosyl residues with release of beta-D-glucose.. The protein operates within glycan metabolism; cellulose degradation. In terms of biological role, beta-glucosidases are one of a number of cellulolytic enzymes involved in the degradation of cellulosic biomass. Catalyzes the last step releasing glucose from the inhibitory cellobiose. In Emericella nidulans (strain FGSC A4 / ATCC 38163 / CBS 112.46 / NRRL 194 / M139) (Aspergillus nidulans), this protein is Probable beta-glucosidase D (bglD).